Consider the following 148-residue polypeptide: Probable histone H2B.1 (148 aa).

Positions 1–32 (MAPKGEKKPAEKKPAEEKKSTVAEKAPAEKKP) are enriched in basic and acidic residues. Residues 1–57 (MAPKGEKKPAEKKPAEEKKSTVAEKAPAEKKPKAGKKLPKEGGSAAGEKKKKRSKKS) form a disordered region. K7, K36, and K37 each carry N6-acetyllysine. Residue K144 forms a Glycyl lysine isopeptide (Lys-Gly) (interchain with G-Cter in ubiquitin) linkage.

This sequence belongs to the histone H2B family. As to quaternary structure, the nucleosome is a histone octamer containing two molecules each of H2A, H2B, H3 and H4 assembled in one H3-H4 heterotetramer and two H2A-H2B heterodimers. The octamer wraps approximately 147 bp of DNA. Can be acetylated to form H2BK6ac, H2BK33ac and H2BK34ac. In terms of processing, monoubiquitinated to form H2BK143ub1; may give a specific tag for epigenetic transcriptional activation.

It localises to the nucleus. Its subcellular location is the chromosome. Core component of nucleosome. Nucleosomes wrap and compact DNA into chromatin, limiting DNA accessibility to the cellular machineries which require DNA as a template. Histones thereby play a central role in transcription regulation, DNA repair, DNA replication and chromosomal stability. DNA accessibility is regulated via a complex set of post-translational modifications of histones, also called histone code, and nucleosome remodeling. This is Probable histone H2B.1 from Medicago truncatula (Barrel medic).